A 339-amino-acid polypeptide reads, in one-letter code: Methylthioribose-1-phosphate isomerase (339 aa).

Residues 52–54 (RGA), Arg89, and Gln188 each bind substrate. Residue Asp229 is the Proton donor of the active site. 239–240 (NK) contributes to the substrate binding site.

The protein belongs to the eIF-2B alpha/beta/delta subunits family. MtnA subfamily.

It carries out the reaction 5-(methylsulfanyl)-alpha-D-ribose 1-phosphate = 5-(methylsulfanyl)-D-ribulose 1-phosphate. Its pathway is amino-acid biosynthesis; L-methionine biosynthesis via salvage pathway; L-methionine from S-methyl-5-thio-alpha-D-ribose 1-phosphate: step 1/6. Its function is as follows. Catalyzes the interconversion of methylthioribose-1-phosphate (MTR-1-P) into methylthioribulose-1-phosphate (MTRu-1-P). The polypeptide is Methylthioribose-1-phosphate isomerase (Anaeromyxobacter sp. (strain K)).